The following is a 298-amino-acid chain: Small ribosomal subunit protein uS3 (298 aa).

A KH type-2 domain is found at 39 to 107; the sequence is VREYLKAKLK…PVAVNIEEVR (69 aa). Residues 214–298 are disordered; that stretch reads PAAVEARTDE…PAAAADGKGE (85 aa). The span at 219 to 245 shows a compositional bias: basic and acidic residues; it reads ARTDEERRPRGPRRDDRGARPGADRPA. Residues 277–298 show a composition bias toward low complexity; the sequence is KPAVQRVRKVAAPAAAADGKGE.

The protein belongs to the universal ribosomal protein uS3 family. As to quaternary structure, part of the 30S ribosomal subunit. Forms a tight complex with proteins S10 and S14.

Functionally, binds the lower part of the 30S subunit head. Binds mRNA in the 70S ribosome, positioning it for translation. This Albidiferax ferrireducens (strain ATCC BAA-621 / DSM 15236 / T118) (Rhodoferax ferrireducens) protein is Small ribosomal subunit protein uS3.